The sequence spans 309 residues: Probable manganese-dependent inorganic pyrophosphatase (309 aa).

Residues H9, D13, D15, D75, H97, and D149 each coordinate Mn(2+).

Belongs to the PPase class C family. Mn(2+) is required as a cofactor.

Its subcellular location is the cytoplasm. The enzyme catalyses diphosphate + H2O = 2 phosphate + H(+). The chain is Probable manganese-dependent inorganic pyrophosphatase from Bacillus cereus (strain ATCC 10987 / NRS 248).